Here is a 152-residue protein sequence, read N- to C-terminus: Large ribosomal subunit protein bL9 (152 aa).

It belongs to the bacterial ribosomal protein bL9 family.

In terms of biological role, binds to the 23S rRNA. This Synechococcus sp. (strain RCC307) protein is Large ribosomal subunit protein bL9.